The chain runs to 199 residues: Holliday junction branch migration complex subunit RuvA (199 aa).

The segment at 1-63 is domain I; it reads MIDYIKGNLV…EDSQRLFGFT (63 aa). The domain II stretch occupies residues 64-142; sequence TRTERLLFEK…DMAPMLEPAA (79 aa). The segment at 143–153 is flexible linker; it reads GADKQQKNPQL. Residues 153–199 form a domain III region; sequence LEDALEALRALGYVEKELKKVEKQLKAETLETDEYIRRALALMLKRP.

It belongs to the RuvA family. Homotetramer. Forms an RuvA(8)-RuvB(12)-Holliday junction (HJ) complex. HJ DNA is sandwiched between 2 RuvA tetramers; dsDNA enters through RuvA and exits via RuvB. An RuvB hexamer assembles on each DNA strand where it exits the tetramer. Each RuvB hexamer is contacted by two RuvA subunits (via domain III) on 2 adjacent RuvB subunits; this complex drives branch migration. In the full resolvosome a probable DNA-RuvA(4)-RuvB(12)-RuvC(2) complex forms which resolves the HJ.

It is found in the cytoplasm. Functionally, the RuvA-RuvB-RuvC complex processes Holliday junction (HJ) DNA during genetic recombination and DNA repair, while the RuvA-RuvB complex plays an important role in the rescue of blocked DNA replication forks via replication fork reversal (RFR). RuvA specifically binds to HJ cruciform DNA, conferring on it an open structure. The RuvB hexamer acts as an ATP-dependent pump, pulling dsDNA into and through the RuvAB complex. HJ branch migration allows RuvC to scan DNA until it finds its consensus sequence, where it cleaves and resolves the cruciform DNA. In Shouchella clausii (strain KSM-K16) (Alkalihalobacillus clausii), this protein is Holliday junction branch migration complex subunit RuvA.